A 765-amino-acid polypeptide reads, in one-letter code: DNA ligase (765 aa).

Residues 1-34 (MAGDDEDRAVPAAEGAPPPSALPPVSGLDVKAAE) form a disordered region. NAD(+) contacts are provided by residues 61 to 65 (DAEYD), 110 to 111 (SL), and Glu144. Lys146 (N6-AMP-lysine intermediate) is an active-site residue. Positions 167, 204, 317, and 341 each coordinate NAD(+). Cys446, Cys449, Cys464, and Cys470 together coordinate Zn(2+). One can recognise a BRCT domain in the interval 687–765 (ATDSAIAGKT…EDEWLAIAQG (79 aa)).

It belongs to the NAD-dependent DNA ligase family. LigA subfamily. The cofactor is Mg(2+). Mn(2+) serves as cofactor.

The catalysed reaction is NAD(+) + (deoxyribonucleotide)n-3'-hydroxyl + 5'-phospho-(deoxyribonucleotide)m = (deoxyribonucleotide)n+m + AMP + beta-nicotinamide D-nucleotide.. Functionally, DNA ligase that catalyzes the formation of phosphodiester linkages between 5'-phosphoryl and 3'-hydroxyl groups in double-stranded DNA using NAD as a coenzyme and as the energy source for the reaction. It is essential for DNA replication and repair of damaged DNA. The polypeptide is DNA ligase (Paracoccus denitrificans (strain Pd 1222)).